Consider the following 325-residue polypeptide: NADH-quinone oxidoreductase subunit H (325 aa).

8 helical membrane passes run 11–31 (VIIA…CGAF), 81–101 (VIFT…MAIV), 114–134 (IGLL…LFAG), 154–174 (LSYE…AGSF), 186–206 (LWNV…GVAV), 237–257 (FFVG…TLFF), 265–285 (LPPV…FILI), and 304–324 (VCLP…LYTA).

It belongs to the complex I subunit 1 family. As to quaternary structure, NDH-1 is composed of 13 different subunits. Subunits NuoA, H, J, K, L, M, N constitute the membrane sector of the complex.

It localises to the cell inner membrane. It carries out the reaction a quinone + NADH + 5 H(+)(in) = a quinol + NAD(+) + 4 H(+)(out). Its function is as follows. NDH-1 shuttles electrons from NADH, via FMN and iron-sulfur (Fe-S) centers, to quinones in the respiratory chain. The immediate electron acceptor for the enzyme in this species is believed to be ubiquinone. Couples the redox reaction to proton translocation (for every two electrons transferred, four hydrogen ions are translocated across the cytoplasmic membrane), and thus conserves the redox energy in a proton gradient. This subunit may bind ubiquinone. The protein is NADH-quinone oxidoreductase subunit H of Erwinia tasmaniensis (strain DSM 17950 / CFBP 7177 / CIP 109463 / NCPPB 4357 / Et1/99).